The following is a 300-amino-acid chain: Cation-efflux pump FieF (300 aa).

4 helical membrane-spanning segments follow: residues 12-32 (AAIAATAMASLLLLIKIFAWW), 39-59 (ILAALVDSLVDIGASLTNLLV), 82-102 (AALAQSMFISGSALFLFLTGI), and 114-134 (PGVGVIVTIVALICTIILVSF). The Zn(2+) site is built by Asp45 and Asp49. 2 residues coordinate Zn(2+): His153 and Asp157. A run of 2 helical transmembrane segments spans residues 156–176 (SDVMMNGAILLALGLSWYGWH) and 178–198 (ADALFALGIGIYILYSALRMG).

The protein belongs to the cation diffusion facilitator (CDF) transporter (TC 2.A.4) family. FieF subfamily. As to quaternary structure, homodimer.

The protein resides in the cell inner membrane. It carries out the reaction Zn(2+)(in) + H(+)(out) = Zn(2+)(out) + H(+)(in). The enzyme catalyses Cd(2+)(in) + H(+)(out) = Cd(2+)(out) + H(+)(in). The catalysed reaction is Fe(2+)(in) + H(+)(out) = Fe(2+)(out) + H(+)(in). Functionally, divalent metal cation transporter which exports Zn(2+), Cd(2+) and possibly Fe(2+). May be involved in zinc and iron detoxification by efflux. In Shigella boydii serotype 18 (strain CDC 3083-94 / BS512), this protein is Cation-efflux pump FieF.